The following is a 225-amino-acid chain: Cytidylate kinase (225 aa).

11–19 (GPAAAGKST) serves as a coordination point for ATP.

This sequence belongs to the cytidylate kinase family. Type 1 subfamily.

It localises to the cytoplasm. The catalysed reaction is CMP + ATP = CDP + ADP. It catalyses the reaction dCMP + ATP = dCDP + ADP. This is Cytidylate kinase from Bacillus cereus (strain G9842).